The primary structure comprises 627 residues: (+)-sabinene synthase, chloroplastic (627 aa).

Residues 1–46 constitute a chloroplast transit peptide; the sequence is MSVISIVPLASNSCLYKSLMSSTHELKALCRPIATLGMCRRGKSVM. Mg(2+)-binding residues include Asp-378, Asp-382, and Asp-530. The short motif at 378–382 is the DDXXD motif element; the sequence is DDIYD.

It belongs to the terpene synthase family. Tpsd subfamily. Monomer. Requires Mg(2+) as cofactor.

The protein localises to the plastid. It is found in the chloroplast. It carries out the reaction (2E)-geranyl diphosphate = (1R,5R)-sabinene + diphosphate. Its pathway is terpene metabolism; oleoresin biosynthesis. In terms of biological role, terpene synthase (TPS) involved in defensive oleoresin formation in conifers in response to insect attack (e.g. white pine weevil P.strobi) or other injury. Produces (+)-sabinene from geranyl diphosphate, but has no activity with geranylgeranyl diphosphate or farnesyl diphosphate. In Picea sitchensis (Sitka spruce), this protein is (+)-sabinene synthase, chloroplastic (TPS-sab).